The chain runs to 147 residues: Cyanate hydratase (147 aa).

Catalysis depends on residues arginine 88, glutamate 91, and serine 114.

This sequence belongs to the cyanase family.

It catalyses the reaction cyanate + hydrogencarbonate + 3 H(+) = NH4(+) + 2 CO2. Its function is as follows. Catalyzes the reaction of cyanate with bicarbonate to produce ammonia and carbon dioxide. The polypeptide is Cyanate hydratase (Dechloromonas aromatica (strain RCB)).